The sequence spans 1025 residues: Exocyst complex component 6 (1025 aa).

Composition is skewed to basic and acidic residues over residues 1–10 (MSNKKQKEEI) and 22–52 (MVRDKDKEQKEEKREKKEKKRLEKKEAENVK). Disordered regions lie at residues 1–122 (MSNK…TRHL), 135–154 (LSSQDRSSSLPHSSQDDQAK), and 666–691 (QFGDKNLNNNNNNDDDDDYFDEDENE). A coiled-coil region spans residues 19 to 68 (LKTMVRDKDKEQKEEKREKKEKKRLEKKEAENVKKEKKKEKKELKKIGKA). Low complexity predominate over residues 71–93 (SGSITSDSSTHSGAQEFDSYGND). The span at 104–118 (SIDSNGLSSSGQPMQ) shows a compositional bias: polar residues. Composition is skewed to low complexity over residues 135 to 147 (LSSQDRSSSLPHS) and 666 to 677 (QFGDKNLNNNNN). Acidic residues predominate over residues 678–691 (NDDDDDYFDEDENE).

The protein belongs to the SEC15 family. As to quaternary structure, the exocyst complex is composed of sec3/exoc1, sec5/exoc2, sec6/exoc3, sec8/exoc4, sec10/exoc5, sec15/exoc6, exo70/exoc7 and exo84/exoc8.

It is found in the cytoplasm. Its subcellular location is the perinuclear region. It localises to the midbody. The protein resides in the midbody ring. In terms of biological role, component of the exocyst complex involved in the docking of exocytic vesicles with fusion sites on the plasma membrane. This is Exocyst complex component 6 (exoc6) from Dictyostelium discoideum (Social amoeba).